Reading from the N-terminus, the 391-residue chain is UPF0328 protein ECU06_1650 (391 aa).

Belongs to the UPF0328 family.

This Encephalitozoon cuniculi (strain GB-M1) (Microsporidian parasite) protein is UPF0328 protein ECU06_1650.